Reading from the N-terminus, the 37-residue chain is Large ribosomal subunit protein bL36 (37 aa).

This sequence belongs to the bacterial ribosomal protein bL36 family.

This is Large ribosomal subunit protein bL36 from Caldicellulosiruptor saccharolyticus (strain ATCC 43494 / DSM 8903 / Tp8T 6331).